Here is a 56-residue protein sequence, read N- to C-terminus: Protein YqiD (56 aa).

A helical transmembrane segment spans residues 2–22; the sequence is FIAWYWIVLIALVVVGYFLHL.

The protein resides in the cell inner membrane. This is Protein YqiD from Escherichia coli (strain K12).